The following is a 236-amino-acid chain: Uridylate kinase (236 aa).

Lysine 12 to glycine 15 serves as a coordination point for ATP. The tract at residues glycine 20–glycine 25 is involved in allosteric activation by GTP. Residue glycine 54 participates in UMP binding. The ATP site is built by glycine 55 and arginine 59. Residues aspartate 72 and threonine 133–threonine 140 each bind UMP. 2 residues coordinate ATP: tyrosine 166 and aspartate 169.

This sequence belongs to the UMP kinase family. Homohexamer.

It localises to the cytoplasm. It catalyses the reaction UMP + ATP = UDP + ADP. It functions in the pathway pyrimidine metabolism; CTP biosynthesis via de novo pathway; UDP from UMP (UMPK route): step 1/1. Its activity is regulated as follows. Allosterically activated by GTP. Inhibited by UTP. Functionally, catalyzes the reversible phosphorylation of UMP to UDP. The sequence is that of Uridylate kinase from Clostridium novyi (strain NT).